The sequence spans 424 residues: 3-phosphoshikimate 1-carboxyvinyltransferase (424 aa).

Positions 21, 22, and 26 each coordinate 3-phosphoshikimate. Lysine 21 is a phosphoenolpyruvate binding site. Residues glycine 91 and arginine 119 each contribute to the phosphoenolpyruvate site. 3-phosphoshikimate contacts are provided by serine 164, glutamine 166, aspartate 310, and lysine 337. Residue glutamine 166 participates in phosphoenolpyruvate binding. Aspartate 310 (proton acceptor) is an active-site residue. 2 residues coordinate phosphoenolpyruvate: arginine 341 and arginine 382.

It belongs to the EPSP synthase family. As to quaternary structure, monomer.

It is found in the cytoplasm. It catalyses the reaction 3-phosphoshikimate + phosphoenolpyruvate = 5-O-(1-carboxyvinyl)-3-phosphoshikimate + phosphate. It participates in metabolic intermediate biosynthesis; chorismate biosynthesis; chorismate from D-erythrose 4-phosphate and phosphoenolpyruvate: step 6/7. Functionally, catalyzes the transfer of the enolpyruvyl moiety of phosphoenolpyruvate (PEP) to the 5-hydroxyl of shikimate-3-phosphate (S3P) to produce enolpyruvyl shikimate-3-phosphate and inorganic phosphate. The protein is 3-phosphoshikimate 1-carboxyvinyltransferase of Campylobacter curvus (strain 525.92).